The following is a 284-amino-acid chain: uncharacterized protein (284 aa).

Low complexity-rich tracts occupy residues 110-123 (NGPR…PNNG) and 130-149 (NGPM…NGPN). The segment at 110-176 (NGPRGRQMNG…PNEFDSDDDD (67 aa)) is disordered.

It localises to the virion. This is an uncharacterized protein from Acanthamoeba polyphaga mimivirus (APMV).